The chain runs to 440 residues: Argininosuccinate lyase (440 aa).

This sequence belongs to the lyase 1 family. Argininosuccinate lyase subfamily.

It is found in the cytoplasm. It catalyses the reaction 2-(N(omega)-L-arginino)succinate = fumarate + L-arginine. The protein operates within amino-acid biosynthesis; L-arginine biosynthesis; L-arginine from L-ornithine and carbamoyl phosphate: step 3/3. The sequence is that of Argininosuccinate lyase from Clostridium botulinum (strain Kyoto / Type A2).